A 429-amino-acid polypeptide reads, in one-letter code: Protein phosphatase 2C homolog 2 (429 aa).

One can recognise a PPM-type phosphatase domain in the interval 16 to 291 (LYGLSAMQGW…DNMTMIIIGL (276 aa)). Residues D64, G65, D233, and D282 each contribute to the Mn(2+) site. 2 disordered regions span residues 320–348 (YGKS…NDRS) and 384–429 (RDVT…SASS). Over residues 384–397 (RDVTNHLQHDKAEE) the composition is skewed to basic and acidic residues. Over residues 405–419 (SESPSSANKNSSGSG) the composition is skewed to low complexity.

Belongs to the PP2C family. Mg(2+) is required as a cofactor. It depends on Mn(2+) as a cofactor.

The protein resides in the cytoplasm. The protein localises to the nucleus. It carries out the reaction O-phospho-L-seryl-[protein] + H2O = L-seryl-[protein] + phosphate. The catalysed reaction is O-phospho-L-threonyl-[protein] + H2O = L-threonyl-[protein] + phosphate. Its function is as follows. Dephosphorylating regulator for many key proteins. Dephosphorylates sakA, to negatively regulate the stress-activated p38MAPK cascade. This chain is Protein phosphatase 2C homolog 2, found in Aspergillus fumigatus (strain ATCC MYA-4609 / CBS 101355 / FGSC A1100 / Af293) (Neosartorya fumigata).